Here is a 56-residue protein sequence, read N- to C-terminus: Large ribosomal subunit protein uL30 (56 aa).

It belongs to the universal ribosomal protein uL30 family. As to quaternary structure, part of the 50S ribosomal subunit.

The polypeptide is Large ribosomal subunit protein uL30 (Nitratidesulfovibrio vulgaris (strain ATCC 29579 / DSM 644 / CCUG 34227 / NCIMB 8303 / VKM B-1760 / Hildenborough) (Desulfovibrio vulgaris)).